A 363-amino-acid polypeptide reads, in one-letter code: Pyrimidine monooxygenase RutA (363 aa).

FMN contacts are provided by residues 49-50 (IK), asparagine 115, glutamate 124, 140-141 (RY), and serine 190.

The protein belongs to the NtaA/SnaA/DszA monooxygenase family. RutA subfamily.

It carries out the reaction uracil + FMNH2 + NADH + O2 = (Z)-3-ureidoacrylate + FMN + NAD(+) + H2O + H(+). It catalyses the reaction thymine + FMNH2 + NADH + O2 = (Z)-2-methylureidoacrylate + FMN + NAD(+) + H2O + H(+). Functionally, catalyzes the pyrimidine ring opening between N-3 and C-4 by an unusual flavin hydroperoxide-catalyzed mechanism, adding oxygen atoms in the process to yield ureidoacrylate peracid, that immediately reacts with FMN forming ureidoacrylate and FMN-N(5)-oxide. The FMN-N(5)-oxide reacts spontaneously with NADH to produce FMN. Requires the flavin reductase RutF to regenerate FMN in vivo. The protein is Pyrimidine monooxygenase RutA of Enterobacter cloacae subsp. cloacae (strain ATCC 13047 / DSM 30054 / NBRC 13535 / NCTC 10005 / WDCM 00083 / NCDC 279-56).